We begin with the raw amino-acid sequence, 361 residues long: Pseudouridine-5'-phosphate glycosidase (361 aa).

Glu-27 functions as the Proton donor in the catalytic mechanism. 2 residues coordinate substrate: Lys-88 and Val-108. Position 140 (Asp-140) interacts with Mn(2+). 142–144 (SAD) contacts substrate. The Nucleophile role is filled by Lys-161. The tract at residues 306 to 361 (DRSPTDPAAPDPTAPDPAAPDPTAPDPAAPDSAAPDLAGPDPSAPDPAAVARAHRP) is disordered. Pro residues predominate over residues 312–333 (PAAPDPTAPDPAAPDPTAPDPA). The segment covering 334 to 354 (APDSAAPDLAGPDPSAPDPAA) has biased composition (low complexity).

It belongs to the pseudouridine-5'-phosphate glycosidase family. In terms of assembly, homotrimer. The cofactor is Mn(2+).

It catalyses the reaction D-ribose 5-phosphate + uracil = psi-UMP + H2O. Its function is as follows. Catalyzes the reversible cleavage of pseudouridine 5'-phosphate (PsiMP) to ribose 5-phosphate and uracil. Functions biologically in the cleavage direction, as part of a pseudouridine degradation pathway. In Frankia alni (strain DSM 45986 / CECT 9034 / ACN14a), this protein is Pseudouridine-5'-phosphate glycosidase.